Consider the following 175-residue polypeptide: MQPTPSEYARTPVRIEMQRSKERNSMVYKEMYNDAQRKYSEALDRISKLTDAYLREKAEVENFIKIKDREVEMSKKNANEKLLKDFLPVLDSIDAAIQAEKDNNLIRIRDQMLGVLSRYGLKPIKAEGSKFDPYLHEVVGVTADGEDGMVKYEVQRGYTLNDGVLRTSKVIVVKR.

This sequence belongs to the GrpE family. Homodimer.

Its subcellular location is the cytoplasm. Functionally, participates actively in the response to hyperosmotic and heat shock by preventing the aggregation of stress-denatured proteins, in association with DnaK and GrpE. It is the nucleotide exchange factor for DnaK and may function as a thermosensor. Unfolded proteins bind initially to DnaJ; upon interaction with the DnaJ-bound protein, DnaK hydrolyzes its bound ATP, resulting in the formation of a stable complex. GrpE releases ADP from DnaK; ATP binding to DnaK triggers the release of the substrate protein, thus completing the reaction cycle. Several rounds of ATP-dependent interactions between DnaJ, DnaK and GrpE are required for fully efficient folding. The protein is Protein GrpE of Thermoplasma acidophilum (strain ATCC 25905 / DSM 1728 / JCM 9062 / NBRC 15155 / AMRC-C165).